An 874-amino-acid polypeptide reads, in one-letter code: Probable inorganic carbon transporter subunit DabA (874 aa).

Zn(2+) contacts are provided by Cys-398, Asp-400, His-580, and Cys-595.

It belongs to the inorganic carbon transporter (TC 9.A.2) DabA family. As to quaternary structure, forms a complex with DabB. It depends on Zn(2+) as a cofactor.

Its subcellular location is the cell membrane. Functionally, part of an energy-coupled inorganic carbon pump. This Bacillus cereus (strain AH820) protein is Probable inorganic carbon transporter subunit DabA.